A 487-amino-acid chain; its full sequence is NADH-quinone oxidoreductase subunit N (487 aa).

Transmembrane regions (helical) follow at residues 7 to 27 (LTLI…ILIT), 37 to 57 (LVSI…APAL), 81 to 101 (FAKI…PAFF), 112 to 132 (PVLV…GDLI), 166 to 186 (FVLG…VYGF), 207 to 227 (ALFG…AVPF), 237 to 257 (GAPT…AVAL), 276 to 296 (IVIF…IGQT), 307 to 327 (INNV…GLSA), 329 to 349 (LTYL…LLML), 373 to 393 (LAWC…LLGF), 407 to 427 (DMVL…FYYI), and 452 to 472 (VLLI…TGWL).

The protein belongs to the complex I subunit 2 family. NDH-1 is composed of 14 different subunits. Subunits NuoA, H, J, K, L, M, N constitute the membrane sector of the complex.

The protein resides in the cell inner membrane. The enzyme catalyses a quinone + NADH + 5 H(+)(in) = a quinol + NAD(+) + 4 H(+)(out). In terms of biological role, NDH-1 shuttles electrons from NADH, via FMN and iron-sulfur (Fe-S) centers, to quinones in the respiratory chain. The immediate electron acceptor for the enzyme in this species is believed to be ubiquinone. Couples the redox reaction to proton translocation (for every two electrons transferred, four hydrogen ions are translocated across the cytoplasmic membrane), and thus conserves the redox energy in a proton gradient. The sequence is that of NADH-quinone oxidoreductase subunit N from Erythrobacter litoralis (strain HTCC2594).